The following is a 302-amino-acid chain: Glycine--tRNA ligase alpha subunit (302 aa).

Belongs to the class-II aminoacyl-tRNA synthetase family. Tetramer of two alpha and two beta subunits.

The protein localises to the cytoplasm. It catalyses the reaction tRNA(Gly) + glycine + ATP = glycyl-tRNA(Gly) + AMP + diphosphate. This chain is Glycine--tRNA ligase alpha subunit, found in Baumannia cicadellinicola subsp. Homalodisca coagulata.